The following is a 102-amino-acid chain: Large ribosomal subunit protein uL24 (102 aa).

Belongs to the universal ribosomal protein uL24 family. In terms of assembly, part of the 50S ribosomal subunit.

In terms of biological role, one of two assembly initiator proteins, it binds directly to the 5'-end of the 23S rRNA, where it nucleates assembly of the 50S subunit. One of the proteins that surrounds the polypeptide exit tunnel on the outside of the subunit. The sequence is that of Large ribosomal subunit protein uL24 from Leuconostoc citreum (strain KM20).